The chain runs to 370 residues: Anhydro-N-acetylmuramic acid kinase (370 aa).

ATP is bound at residue 12–19; that stretch reads GTSLDGVD.

Belongs to the anhydro-N-acetylmuramic acid kinase family.

The catalysed reaction is 1,6-anhydro-N-acetyl-beta-muramate + ATP + H2O = N-acetyl-D-muramate 6-phosphate + ADP + H(+). It participates in amino-sugar metabolism; 1,6-anhydro-N-acetylmuramate degradation. The protein operates within cell wall biogenesis; peptidoglycan recycling. Its function is as follows. Catalyzes the specific phosphorylation of 1,6-anhydro-N-acetylmuramic acid (anhMurNAc) with the simultaneous cleavage of the 1,6-anhydro ring, generating MurNAc-6-P. Is required for the utilization of anhMurNAc either imported from the medium or derived from its own cell wall murein, and thus plays a role in cell wall recycling. The protein is Anhydro-N-acetylmuramic acid kinase of Pectobacterium carotovorum subsp. carotovorum (strain PC1).